A 144-amino-acid chain; its full sequence is Mediator of RNA polymerase II transcription subunit 21 (144 aa).

It belongs to the Mediator complex subunit 21 family. In terms of assembly, component of the Mediator complex, which is composed of MED1, MED4, MED6, MED7, MED8, MED9, MED10, MED11, MED12, MED13, MED13L, MED14, MED15, MED16, MED17, MED18, MED19, MED20, MED21, MED22, MED23, MED24, MED25, MED26, MED27, MED29, MED30, MED31, CCNC, CDK8 and CDC2L6/CDK11. The MED12, MED13, CCNC and CDK8 subunits form a distinct module termed the CDK8 module. Mediator containing the CDK8 module is less active than Mediator lacking this module in supporting transcriptional activation. Individual preparations of the Mediator complex lacking one or more distinct subunits have been variously termed ARC, CRSP, DRIP, PC2, SMCC and TRAP. Interacts with PPARG. Interacts with THRA in a ligand-dependent fashion.

The protein localises to the nucleus. Functionally, component of the Mediator complex, a coactivator involved in the regulated transcription of nearly all RNA polymerase II-dependent genes. Mediator functions as a bridge to convey information from gene-specific regulatory proteins to the basal RNA polymerase II transcription machinery. Mediator is recruited to promoters by direct interactions with regulatory proteins and serves as a scaffold for the assembly of a functional preinitiation complex with RNA polymerase II and the general transcription factors. The sequence is that of Mediator of RNA polymerase II transcription subunit 21 (MED21) from Macaca fascicularis (Crab-eating macaque).